The chain runs to 203 residues: Glycerol-3-phosphate acyltransferase (203 aa).

The Periplasmic portion of the chain corresponds to 1-3; that stretch reads MSA. Residues 4–24 form a helical membrane-spanning segment; it reads IAPGMILFAYLCGSISSAILV. The Cytoplasmic segment spans residues 25-52; sequence CRIAGLPDPRESGSGNPGATNVLRIGGK. Residues 53–73 traverse the membrane as a helical segment; sequence GAAVAVLIFDILKGMLPVWGA. Residues 74–80 lie on the Periplasmic side of the membrane; the sequence is YALGVTP. Residues 81 to 101 traverse the membrane as a helical segment; sequence FWLGLIAIAACLGHIWPVFFG. Over 102–111 the chain is Cytoplasmic; sequence FKGGKGVATA. A helical transmembrane segment spans residues 112–132; the sequence is FGAIAPIGWDLTGVMAGTWLL. Residues 133–137 are Periplasmic-facing; that stretch reads TVLLS. The helical transmembrane segment at 138 to 158 threads the bilayer; that stretch reads GYSSLGAIVSALIAPFYVWWF. Topologically, residues 159-203 are cytoplasmic; it reads KPQFTFPVSMLSCLILLRHHDNIQRLWRRQETKIWTKLKKKRQKD.

The protein belongs to the PlsY family. In terms of assembly, probably interacts with PlsX.

Its subcellular location is the cell inner membrane. The enzyme catalyses sn-glycerol 3-phosphate + an acyl-CoA = a 1-acyl-sn-glycero-3-phosphate + CoA. The catalysed reaction is a fatty acyl-[ACP] + sn-glycerol 3-phosphate = a 1-acyl-sn-glycero-3-phosphate + holo-[ACP]. Its pathway is lipid metabolism; phospholipid metabolism. Functionally, catalyzes the transfer of an acyl group from acyl-ACP to glycerol-3-phosphate (G3P) to form lysophosphatidic acid (LPA). This enzyme can also utilize acyl-CoA as fatty acyl donor, but not acyl-PO(4). The chain is Glycerol-3-phosphate acyltransferase from Salmonella agona (strain SL483).